Consider the following 196-residue polypeptide: Pyridoxine/pyridoxamine 5'-phosphate oxidase (196 aa).

Position 49 (lysine 49) interacts with substrate. FMN is bound by residues lysine 66 and glutamine 88. Positions 106, 110, and 114 each coordinate substrate. Residues 123–124 (QS) and tryptophan 168 each bind FMN. A substrate-binding site is contributed by 174 to 176 (RLH). Residue arginine 178 coordinates FMN.

It belongs to the pyridoxamine 5'-phosphate oxidase family. As to quaternary structure, homodimer. FMN is required as a cofactor.

It carries out the reaction pyridoxamine 5'-phosphate + O2 + H2O = pyridoxal 5'-phosphate + H2O2 + NH4(+). The catalysed reaction is pyridoxine 5'-phosphate + O2 = pyridoxal 5'-phosphate + H2O2. Its pathway is cofactor metabolism; pyridoxal 5'-phosphate salvage; pyridoxal 5'-phosphate from pyridoxamine 5'-phosphate: step 1/1. The protein operates within cofactor metabolism; pyridoxal 5'-phosphate salvage; pyridoxal 5'-phosphate from pyridoxine 5'-phosphate: step 1/1. In terms of biological role, catalyzes the oxidation of either pyridoxine 5'-phosphate (PNP) or pyridoxamine 5'-phosphate (PMP) into pyridoxal 5'-phosphate (PLP). This is Pyridoxine/pyridoxamine 5'-phosphate oxidase from Bdellovibrio bacteriovorus (strain ATCC 15356 / DSM 50701 / NCIMB 9529 / HD100).